A 134-amino-acid polypeptide reads, in one-letter code: Fluoride-specific ion channel FluC 2 (134 aa).

The next 4 membrane-spanning stretches (helical) occupy residues 1-21, 28-48, 68-88, and 92-112; these read MNYF…EITG, IFPV…LFFM, GFLG…LLLF, and LLIG…SGIL. G71 and T74 together coordinate Na(+).

It belongs to the fluoride channel Fluc/FEX (TC 1.A.43) family.

The protein localises to the cell membrane. The catalysed reaction is fluoride(in) = fluoride(out). With respect to regulation, na(+) is not transported, but it plays an essential structural role and its presence is essential for fluoride channel function. Functionally, fluoride-specific ion channel. Important for reducing fluoride concentration in the cell, thus reducing its toxicity. The chain is Fluoride-specific ion channel FluC 2 from Carboxydothermus hydrogenoformans (strain ATCC BAA-161 / DSM 6008 / Z-2901).